Reading from the N-terminus, the 230-residue chain is Orotidine 5'-phosphate decarboxylase (230 aa).

Residues aspartate 11, lysine 34, 61-70 (DLKLHDIPNT), threonine 117, arginine 179, glutamine 188, glycine 208, and arginine 209 each bind substrate. Lysine 63 functions as the Proton donor in the catalytic mechanism.

Belongs to the OMP decarboxylase family. Type 1 subfamily. In terms of assembly, homodimer.

The catalysed reaction is orotidine 5'-phosphate + H(+) = UMP + CO2. The protein operates within pyrimidine metabolism; UMP biosynthesis via de novo pathway; UMP from orotate: step 2/2. Catalyzes the decarboxylation of orotidine 5'-monophosphate (OMP) to uridine 5'-monophosphate (UMP). The sequence is that of Orotidine 5'-phosphate decarboxylase from Streptococcus equi subsp. zooepidemicus (strain MGCS10565).